The following is an 89-amino-acid chain: Small ribosomal subunit protein uS15 (89 aa).

This sequence belongs to the universal ribosomal protein uS15 family. Part of the 30S ribosomal subunit. Forms a bridge to the 50S subunit in the 70S ribosome, contacting the 23S rRNA.

Functionally, one of the primary rRNA binding proteins, it binds directly to 16S rRNA where it helps nucleate assembly of the platform of the 30S subunit by binding and bridging several RNA helices of the 16S rRNA. In terms of biological role, forms an intersubunit bridge (bridge B4) with the 23S rRNA of the 50S subunit in the ribosome. This is Small ribosomal subunit protein uS15 from Limosilactobacillus reuteri (strain DSM 20016) (Lactobacillus reuteri).